We begin with the raw amino-acid sequence, 421 residues long: Queuine tRNA-ribosyltransferase accessory subunit 2 (421 aa).

Zn(2+)-binding residues include Cys328, Cys330, Cys333, and His359.

The protein belongs to the queuine tRNA-ribosyltransferase family. QTRT2 subfamily. In terms of assembly, heterodimer of a catalytic subunit and an accessory subunit. The cofactor is Zn(2+).

The protein localises to the cytoplasm. Non-catalytic subunit of the queuine tRNA-ribosyltransferase (TGT) that catalyzes the base-exchange of a guanine (G) residue with queuine (Q) at position 34 (anticodon wobble position) in tRNAs with GU(N) anticodons (tRNA-Asp, -Asn, -His and -Tyr), resulting in the hypermodified nucleoside queuosine (7-(((4,5-cis-dihydroxy-2-cyclopenten-1-yl)amino)methyl)-7-deazaguanosine). This chain is Queuine tRNA-ribosyltransferase accessory subunit 2, found in Aedes aegypti (Yellowfever mosquito).